Consider the following 197-residue polypeptide: Guanylate kinase (197 aa).

One can recognise a Guanylate kinase-like domain in the interval 6-191 (SKLIILSGPS…CVAQIEKIIS (186 aa)). 13 to 20 (GPSGVGKG) provides a ligand contact to ATP.

This sequence belongs to the guanylate kinase family.

The protein localises to the cytoplasm. The catalysed reaction is GMP + ATP = GDP + ADP. In terms of biological role, essential for recycling GMP and indirectly, cGMP. The protein is Guanylate kinase of Mesomycoplasma hyopneumoniae (strain 232) (Mycoplasma hyopneumoniae).